A 344-amino-acid chain; its full sequence is MTSSWPQLLELLLRGGELEDDQAAALMQAWLAEELEPVQTGAFLAALRCRNYRPVELAAMARVLRAASPLPCPRPALPLVDTCGTGGDGADSFNISTAVAFTAAACGVVVAKHGNRSASGKVGSADVLEGLGLQLQAPLQQVVGALEQAGITFLFAPGWHPALKSLAPLRKCLGVRTVFNLLGPLVNPLQPDAQVLGVATEDLLEPMAGALQLLGLKRAVVVYGHGGLDEASLSGTNQLMVLEDGQLRRDQLDPQALGLALQPIDALSGGDLARNQTILKAVLQGQGSQAQKDVVALNTALVLWSAGQVSSWREGVQQAHDCLASGKPWQRFEQLAAALTPVGG.

Residues Gly-84, 87-88, Ser-92, 94-97, 112-120, and Ser-124 each bind 5-phospho-alpha-D-ribose 1-diphosphate; these read GD, NIST, and KHGNRSASG. Gly-84 is a binding site for anthranilate. A Mg(2+)-binding site is contributed by Ser-96. Asn-115 lines the anthranilate pocket. Arg-170 contacts anthranilate. Mg(2+) contacts are provided by Asp-229 and Glu-230.

It belongs to the anthranilate phosphoribosyltransferase family. In terms of assembly, homodimer. Mg(2+) is required as a cofactor.

It carries out the reaction N-(5-phospho-beta-D-ribosyl)anthranilate + diphosphate = 5-phospho-alpha-D-ribose 1-diphosphate + anthranilate. Its pathway is amino-acid biosynthesis; L-tryptophan biosynthesis; L-tryptophan from chorismate: step 2/5. Its function is as follows. Catalyzes the transfer of the phosphoribosyl group of 5-phosphorylribose-1-pyrophosphate (PRPP) to anthranilate to yield N-(5'-phosphoribosyl)-anthranilate (PRA). This Synechococcus sp. (strain RCC307) protein is Anthranilate phosphoribosyltransferase.